The primary structure comprises 323 residues: Porphobilinogen deaminase (323 aa).

An S-(dipyrrolylmethanemethyl)cysteine modification is found at Cys-240.

It belongs to the HMBS family. Monomer. Requires dipyrromethane as cofactor.

It carries out the reaction 4 porphobilinogen + H2O = hydroxymethylbilane + 4 NH4(+). The protein operates within porphyrin-containing compound metabolism; protoporphyrin-IX biosynthesis; coproporphyrinogen-III from 5-aminolevulinate: step 2/4. In terms of biological role, tetrapolymerization of the monopyrrole PBG into the hydroxymethylbilane pre-uroporphyrinogen in several discrete steps. The protein is Porphobilinogen deaminase of Sulfurovum sp. (strain NBC37-1).